The primary structure comprises 409 residues: Immunity-related GTPase family M protein 1 (409 aa).

Residues 75-251 (IPVSIFVTGD…PKLRDTLHKD (177 aa)) enclose the IRG-type G domain. Residues 84–91 (DSGNGMSS), 109–113 (TGVVR), and 191–193 (KLD) each bind GTP. Position 202 is a phosphoserine (Ser-202). 232–234 (SSL) is a binding site for GTP. Lys-270 is covalently cross-linked (Glycyl lysine isopeptide (Lys-Gly) (interchain with G-Cter in ubiquitin)). The segment at 350 to 374 (KLRLMTCAIVNAFFRLLRFLPCVCC) is alpha-K amphipathic helix.

It belongs to the TRAFAC class dynamin-like GTPase superfamily. IRG family. As to quaternary structure, interacts with ULK1; promoting the coassembly of ULK1 and BECN1. Interacts with BECN1; enhancing BECN1-interacting partners and influencing the composition of the BECN1 complex. Interacts with ATG16L1. Interacts with NOD2; promoting Irgm1 'Lys-63'-linked polyubiquitination, which is required for interactions with the core autophagy factors. Interacts with STX17; promoting STX17 recruitment to autophagosomes. Interacts with ATG8 proteins (GABARAP, GABARAPL1, GABARAPL2, MAP1LC3A, MAP1LC3B and MAP1LC3C); promoting STX17 recruitment to autophagosomes. Interacts with TFEB; promoting association between TFEB and PPP3CB and TFEB dephosphorylation. Interacts with PPP3CB; promoting association between TFEB and PPP3CB and TFEB dephosphorylation. Interacts with NLRP3; preventing NLRP3 inflammasome assembly and promoting SQSTM1/p62-dependent autophagic degradation of NLRP3. Interacts with CGAS; promoting SQSTM1/p62-dependent autophagic degradation of CGAS. Interacts with RIGI/RIG-I; promoting SQSTM1/p62-dependent autophagic degradation of RIGI/RIG-I. Interacts with NOD1; promoting SQSTM1/p62-dependent autophagic degradation of RIGI/RIG-I. Interacts with NOD2; promoting SQSTM1/p62-dependent autophagic degradation of RIGI/RIG-I. Interacts with RIPK2; promoting SQSTM1/p62-dependent autophagic degradation of RIGI/RIG-I. Interacts with PIK3CA. Palmitoylated on C-terminal Cys residues. Palmitoylation, together with the alpha-K amphipathic helix, which binds phosphatidylinositol, mediate binding to membranes. Post-translationally, ubiquitinated via 'Lys-63'-linked polyubiquitination in a NOD2-dependent process. 'Lys-63'-linked polyubiquitination is required for interactions with the core autophagy factors. Ubiquitination at Lys-270 by the DCX(WDR77) complex, also named CLR4(WDR77) complex, in intestinal cells, leading to its degradation by the proteasome. As to expression, expressed in lung and primary macrophages.

The protein resides in the golgi apparatus membrane. It localises to the cell membrane. The protein localises to the cytoplasmic vesicle. It is found in the phagosome membrane. Its subcellular location is the autophagosome membrane. The protein resides in the lysosome membrane. It localises to the late endosome membrane. The protein localises to the mitochondrion membrane. It is found in the lipid droplet. Its subcellular location is the cell projection. The protein resides in the phagocytic cup. The enzyme catalyses GTP + H2O = GDP + phosphate + H(+). Functionally, immunity-related GTPase that plays important roles in innate immunity and inflammatory response. Acts as a dynamin-like protein that binds to intracellular membranes and promotes remodeling and trafficking of those membranes. Required for clearance of acute protozoan and bacterial infections by interacting with autophagy and lysosome regulatory proteins, thereby promoting the fusion of phagosomes with lysosomes for efficient degradation of cargo including microbes. Regulates selective autophagy, including xenophagy and mitophagy, both directly and indirectly. Directly regulates autophagy by acting as a molecular adapter that promotes the coassembly of the core autophagy machinery to mediate antimicrobial defense: Irgm1 (1) activates AMPK, which in turn phosphorylates ULK1 and BECN1 to induce autophagy, (2) promotes the coassembly of ULK1 and BECN1, enhancing BECN1-interacting partners and (3) influences the composition of the BECN1 complex, by competing with the negative regulators BCL2 and RUBCN, to trigger autophagy. Also activates autophagy by promoting recruitment of STX17 to autophagosomes. In collaboration with ATG8 proteins, regulate lysosomal biogenesis, a fundamental process for any autophagic pathway, by promoting TFEB dephosphorylation. Also modulates autophagy by assisting with autophagosome formation and preventing lysosomal deacidification. Regulates autophagy by affecting mitochondrial fusion and fission. Also involved in M1 macrophage activation for the production of proinflammatory cytokines. While activating autophagy, acts as a key negative regulator of the inflammatory and interferon responses both by (1) promoting mitophagy and (2) mediating autophagy-dependent degradation of effectors of the inflammatory response. Promotes degradation of damaged and IFNG/IFN-gamma-stressed mitochondria via mitophagy, preventing cytosolic release of ligands that activate inflammation. Negatively regulates interferon-signaling in hematopoietic stem cells, preserving hematopoietic stem cell number and function. Promotes expansion of activated CD4(+) T-cells by inhibiting IFNG/IFN-gamma signaling, thereby preventing Ifng-mediated cell death of CD4(+) T-cells. Acts as a suppressor of inflammation by promoting recruitment of inflammation effectors, such as CGAS, RIGI/RIG-I and NLRP3, to autophagosome membranes, leading to their SQSTM1/p62-dependent autophagic degradation. Also directly inhibits assembly of the NLRP3 inflammasome by preventing the association between NLRP3 and PYCARD. Acts as a negative regulator of antiviral innate immune response by suppressing the RIPK2-dependent pro-inflammatory response: mediates recruitment of RIPosomes, composed of RIPK2 and NOD1 or NOD2, to autophagosome membranes, promoting their SQSTM1/p62-dependent autophagic degradation. The polypeptide is Immunity-related GTPase family M protein 1 (Mus musculus (Mouse)).